A 375-amino-acid chain; its full sequence is Alcohol dehydrogenase 1 (375 aa).

Ser2 bears the N-acetylserine mark. Cys47, His68, Cys98, Cys101, Cys104, Cys112, and Cys175 together coordinate Zn(2+). NAD(+) contacts are provided by residues 200-205 (GLGGVG), Asp224, and Lys229. Lys234 carries the N6-succinyllysine modification. 293-295 (VGV) contacts NAD(+). Lys340 carries the N6-succinyllysine modification. NAD(+) is bound at residue Arg370.

It belongs to the zinc-containing alcohol dehydrogenase family. Class-I subfamily. Dimer of identical or non-identical chains of three types (A, B, C), which are coded by 3 separate genes at different loci. It depends on Zn(2+) as a cofactor. Expressed at high levels in the liver, small intestine and eye, at moderate levels in kidney, ovary and uterus, and at low levels in the spinal cord, thymus, heart, stomach mucosa, skin and testis.

The protein resides in the cytoplasm. It catalyses the reaction a primary alcohol + NAD(+) = an aldehyde + NADH + H(+). The catalysed reaction is a secondary alcohol + NAD(+) = a ketone + NADH + H(+). This chain is Alcohol dehydrogenase 1 (Adh1), found in Mus musculus (Mouse).